A 125-amino-acid polypeptide reads, in one-letter code: Small ribosomal subunit protein uS12 (125 aa).

Asp89 bears the 3-methylthioaspartic acid mark. Residues 105–125 form a disordered region; the sequence is QGVKDRKQSRSKYGAKKPKAK. The segment covering 113 to 125 has biased composition (basic residues); the sequence is SRSKYGAKKPKAK.

Belongs to the universal ribosomal protein uS12 family. Part of the 30S ribosomal subunit. Contacts proteins S8 and S17. May interact with IF1 in the 30S initiation complex.

Its function is as follows. With S4 and S5 plays an important role in translational accuracy. Interacts with and stabilizes bases of the 16S rRNA that are involved in tRNA selection in the A site and with the mRNA backbone. Located at the interface of the 30S and 50S subunits, it traverses the body of the 30S subunit contacting proteins on the other side and probably holding the rRNA structure together. The combined cluster of proteins S8, S12 and S17 appears to hold together the shoulder and platform of the 30S subunit. The polypeptide is Small ribosomal subunit protein uS12 (Delftia acidovorans (strain DSM 14801 / SPH-1)).